A 216-amino-acid polypeptide reads, in one-letter code: Uracil phosphoribosyltransferase (216 aa).

Residues R85, R110, and 135 to 143 (DPMVATGYS) each bind 5-phospho-alpha-D-ribose 1-diphosphate. Uracil-binding positions include I200 and 205–207 (GDA). Position 206 (D206) interacts with 5-phospho-alpha-D-ribose 1-diphosphate.

It belongs to the UPRTase family. The cofactor is Mg(2+).

The enzyme catalyses UMP + diphosphate = 5-phospho-alpha-D-ribose 1-diphosphate + uracil. The protein operates within pyrimidine metabolism; UMP biosynthesis via salvage pathway; UMP from uracil: step 1/1. With respect to regulation, allosterically activated by GTP. Functionally, catalyzes the conversion of uracil and 5-phospho-alpha-D-ribose 1-diphosphate (PRPP) to UMP and diphosphate. This Burkholderia mallei (strain NCTC 10247) protein is Uracil phosphoribosyltransferase.